The primary structure comprises 61 residues: Large ribosomal subunit protein uL29 (61 aa).

Belongs to the universal ribosomal protein uL29 family.

The protein is Large ribosomal subunit protein uL29 of Nitratidesulfovibrio vulgaris (strain DSM 19637 / Miyazaki F) (Desulfovibrio vulgaris).